The chain runs to 235 residues: Putative uridine kinase C227.14 (235 aa).

Position 36-43 (36-43 (GGPGSGKS)) interacts with ATP.

Belongs to the uridine kinase family.

It localises to the cytoplasm. It is found in the nucleus. The enzyme catalyses uridine + ATP = UMP + ADP + H(+). It catalyses the reaction cytidine + ATP = CMP + ADP + H(+). It functions in the pathway pyrimidine metabolism; CTP biosynthesis via salvage pathway; CTP from cytidine: step 1/3. Its pathway is pyrimidine metabolism; UMP biosynthesis via salvage pathway; UMP from uridine: step 1/1. The chain is Putative uridine kinase C227.14 from Schizosaccharomyces pombe (strain 972 / ATCC 24843) (Fission yeast).